The chain runs to 281 residues: Phosphate import ATP-binding protein PstB 1 (281 aa).

The disordered stretch occupies residues 1 to 34 (MTENTAETADESSDGGVTATTGAATTTPTTPPEP). Over residues 15–28 (GGVTATTGAATTTP) the composition is skewed to low complexity. One can recognise an ABC transporter domain in the interval 36–276 (IRARDLDVFY…PEHQRVEEYI (241 aa)). 68–75 (GPSGCGKS) lines the ATP pocket.

The protein belongs to the ABC transporter superfamily. Phosphate importer (TC 3.A.1.7) family. In terms of assembly, the complex is composed of two ATP-binding proteins (PstB), two transmembrane proteins (PstC and PstA) and a solute-binding protein (PstS).

It is found in the cell membrane. The catalysed reaction is phosphate(out) + ATP + H2O = ADP + 2 phosphate(in) + H(+). Part of the ABC transporter complex PstSACB involved in phosphate import. Responsible for energy coupling to the transport system. This Halobacterium salinarum (strain ATCC 700922 / JCM 11081 / NRC-1) (Halobacterium halobium) protein is Phosphate import ATP-binding protein PstB 1.